The sequence spans 155 residues: uncharacterized protein (155 aa).

Disordered stretches follow at residues 1 to 22 and 108 to 155; these read MSSQ…TFTF and PFNK…DTQA. S2 carries the N-acetylserine modification. S136, S144, and S146 each carry phosphoserine. A compositionally biased stretch (acidic residues) spans 136-155; it reads SDEDLDAESDSEGEDEDTQA.

This is an uncharacterized protein from Rattus norvegicus (Rat).